The primary structure comprises 157 residues: MPRKGPVKKREILPDPVYNDKVVAKLINKVMYDGKKSIAQKIVYGAFDIIREKTGKDPLEVLEAALNNVMPVLEVRPRRVGGATYQVPIEVAPDRRLSLGIRWLVEYARERKDKRTMKEKLAAEIMDAANNTGGAVKKKEDTHRMAEANRAFAHYRW.

The protein belongs to the universal ribosomal protein uS7 family. As to quaternary structure, part of the 30S ribosomal subunit. Contacts proteins S9 and S11.

Its function is as follows. One of the primary rRNA binding proteins, it binds directly to 16S rRNA where it nucleates assembly of the head domain of the 30S subunit. Is located at the subunit interface close to the decoding center, probably blocks exit of the E-site tRNA. In Caldicellulosiruptor bescii (strain ATCC BAA-1888 / DSM 6725 / KCTC 15123 / Z-1320) (Anaerocellum thermophilum), this protein is Small ribosomal subunit protein uS7.